A 178-amino-acid polypeptide reads, in one-letter code: Nicotinamide-nucleotide adenylyltransferase (178 aa).

Belongs to the archaeal NMN adenylyltransferase family. In terms of assembly, homohexamer.

It is found in the cytoplasm. The enzyme catalyses beta-nicotinamide D-ribonucleotide + ATP + H(+) = diphosphate + NAD(+). Its pathway is cofactor biosynthesis; NAD(+) biosynthesis; NAD(+) from nicotinamide D-ribonucleotide: step 1/1. This Methanothermobacter thermautotrophicus (strain ATCC 29096 / DSM 1053 / JCM 10044 / NBRC 100330 / Delta H) (Methanobacterium thermoautotrophicum) protein is Nicotinamide-nucleotide adenylyltransferase.